The primary structure comprises 107 residues: SH3 domain-binding glutamic acid-rich-like protein 2 (107 aa).

Residues 61–67 (QGNPLPP) carry the SH3-binding motif.

It belongs to the SH3BGR family.

It localises to the nucleus. In Bos taurus (Bovine), this protein is SH3 domain-binding glutamic acid-rich-like protein 2 (SH3BGRL2).